Reading from the N-terminus, the 150-residue chain is D-aminoacyl-tRNA deacylase (150 aa).

Residues 140–141 (GP) carry the Gly-cisPro motif, important for rejection of L-amino acids motif.

Belongs to the DTD family. In terms of assembly, homodimer.

It localises to the cytoplasm. The catalysed reaction is glycyl-tRNA(Ala) + H2O = tRNA(Ala) + glycine + H(+). It carries out the reaction a D-aminoacyl-tRNA + H2O = a tRNA + a D-alpha-amino acid + H(+). The enzyme catalyses D-tyrosyl-tRNA(Tyr) + H2O = D-tyrosine + tRNA(Tyr). An aminoacyl-tRNA editing enzyme that deacylates mischarged D-aminoacyl-tRNAs. Hydrolyzes D-tyrosyl-tRNA(Tyr) into D-tyrosine and free tRNA(Tyr). May also deacylate mischarged D-leucyl-tRNA(Leu). Also deacylates mischarged glycyl-tRNA(Ala), protecting cells against glycine mischarging by AlaRS. Acts via tRNA-based rather than protein-based catalysis; rejects L-amino acids rather than detecting D-amino acids in the active site. By recycling D-aminoacyl-tRNA to D-amino acids and free tRNA molecules, this enzyme counteracts the toxicity associated with the formation of D-aminoacyl-tRNA entities in vivo and helps enforce protein L-homochirality. This chain is D-aminoacyl-tRNA deacylase, found in Saccharomyces cerevisiae (strain ATCC 204508 / S288c) (Baker's yeast).